A 340-amino-acid chain; its full sequence is Ferrochelatase (340 aa).

Fe cation-binding residues include H189 and E292.

This sequence belongs to the ferrochelatase family.

Its subcellular location is the cytoplasm. It catalyses the reaction heme b + 2 H(+) = protoporphyrin IX + Fe(2+). It functions in the pathway porphyrin-containing compound metabolism; protoheme biosynthesis; protoheme from protoporphyrin-IX: step 1/1. In terms of biological role, catalyzes the ferrous insertion into protoporphyrin IX. The chain is Ferrochelatase from Pseudomonas syringae pv. tomato (strain ATCC BAA-871 / DC3000).